We begin with the raw amino-acid sequence, 370 residues long: Phosphate acyltransferase (370 aa).

The protein belongs to the PlsX family. Homodimer. Probably interacts with PlsY.

The protein localises to the cytoplasm. It carries out the reaction a fatty acyl-[ACP] + phosphate = an acyl phosphate + holo-[ACP]. Its pathway is lipid metabolism; phospholipid metabolism. In terms of biological role, catalyzes the reversible formation of acyl-phosphate (acyl-PO(4)) from acyl-[acyl-carrier-protein] (acyl-ACP). This enzyme utilizes acyl-ACP as fatty acyl donor, but not acyl-CoA. The sequence is that of Phosphate acyltransferase from Polaromonas naphthalenivorans (strain CJ2).